Consider the following 168-residue polypeptide: Protein-export protein SecB (168 aa).

This sequence belongs to the SecB family. Homotetramer, a dimer of dimers. One homotetramer interacts with 1 SecA dimer.

Its subcellular location is the cytoplasm. One of the proteins required for the normal export of preproteins out of the cell cytoplasm. It is a molecular chaperone that binds to a subset of precursor proteins, maintaining them in a translocation-competent state. It also specifically binds to its receptor SecA. This is Protein-export protein SecB from Glaesserella parasuis serovar 5 (strain SH0165) (Haemophilus parasuis).